We begin with the raw amino-acid sequence, 439 residues long: Methionine aminopeptidase 2-1 (439 aa).

The disordered stretch occupies residues 1–87 (MSGGESRSPD…DKLFPSGNFP (87 aa)). A compositionally biased stretch (acidic residues) spans 22 to 32 (GGDDEESDGDG). Positions 47 to 61 (KKRKKRNKKKSKKKS) are enriched in basic residues. Residue histidine 190 participates in substrate binding. 3 residues coordinate a divalent metal cation: aspartate 211, aspartate 222, and histidine 291. Substrate is bound at residue histidine 299. A divalent metal cation is bound by residues glutamate 324 and glutamate 420.

The protein belongs to the peptidase M24A family. Methionine aminopeptidase eukaryotic type 2 subfamily. Co(2+) is required as a cofactor. The cofactor is Zn(2+). Requires Mn(2+) as cofactor. Fe(2+) serves as cofactor.

Its subcellular location is the cytoplasm. It catalyses the reaction Release of N-terminal amino acids, preferentially methionine, from peptides and arylamides.. Its function is as follows. Cotranslationally removes the N-terminal methionine from nascent proteins. The N-terminal methionine is often cleaved when the second residue in the primary sequence is small and uncharged (Met-Ala-, Cys, Gly, Pro, Ser, Thr, or Val). The protein is Methionine aminopeptidase 2-1 of Chaetomium globosum (strain ATCC 6205 / CBS 148.51 / DSM 1962 / NBRC 6347 / NRRL 1970) (Soil fungus).